We begin with the raw amino-acid sequence, 553 residues long: Ribonuclease J 2 (553 aa).

His-69, His-71, His-138, and Asp-160 together coordinate Zn(2+). Residue 361 to 365 coordinates substrate; it reads RVSGH.

Belongs to the metallo-beta-lactamase superfamily. RNA-metabolizing metallo-beta-lactamase-like family. Bacterial RNase J subfamily. As to quaternary structure, homodimer, may be a subunit of the RNA degradosome. Zn(2+) is required as a cofactor.

The protein localises to the cytoplasm. In terms of biological role, an RNase that has 5'-3' exonuclease and possibly endonuclease activity. Involved in maturation of rRNA and in some organisms also mRNA maturation and/or decay. Has an overlapping but not completely redundant role with RNase J1 in the decay of mRNA. This Streptococcus pyogenes serotype M3 (strain ATCC BAA-595 / MGAS315) protein is Ribonuclease J 2.